Reading from the N-terminus, the 822-residue chain is von Willebrand factor A domain-containing protein 5A (822 aa).

Residues 1 to 131 (MEHHWGLITG…KVAVTLRYVQ (131 aa)) enclose the VIT domain. Positions 281 to 469 (EFVFLMDRSG…LALQCALDDI (189 aa)) constitute a VWFA domain. The disordered stretch occupies residues 657–682 (SMPSPAPIENQGVADSSNEKSNSQNE). Residues 669–680 (VADSSNEKSNSQ) show a composition bias toward polar residues.

May play a role in tumorigenesis as a tumor suppressor. Altered expression of this protein and disruption of the molecular pathway it is involved in may contribute directly to or modify tumorigenesis. In Rattus norvegicus (Rat), this protein is von Willebrand factor A domain-containing protein 5A (Vwa5a).